Reading from the N-terminus, the 156-residue chain is Arginine repressor (156 aa).

This sequence belongs to the ArgR family.

Its subcellular location is the cytoplasm. Its pathway is amino-acid biosynthesis; L-arginine biosynthesis [regulation]. In terms of biological role, regulates arginine biosynthesis genes. The protein is Arginine repressor of Aliivibrio fischeri (strain ATCC 700601 / ES114) (Vibrio fischeri).